Here is a 1036-residue protein sequence, read N- to C-terminus: Non-canonical non-ribosomal peptide synthetase FUB8 (1036 aa).

Residues 21–343 form an adenylation (A) domain region; sequence EIARDEPDRV…LASVVTHPDE (323 aa). The 78-residue stretch at 544–621 folds into the Carrier domain; the sequence is TTEDVVRSGI…QLAHTVWSHL (78 aa). Ser-579 is subject to O-(pantetheine 4'-phosphoryl)serine. The thioester reductase (TR) domain stretch occupies residues 658–899; it reads LTGTTGEIGS…IPIDLLTEVI (242 aa).

Its pathway is mycotoxin biosynthesis. Non-canonical non-ribosomal peptide synthetase; part of the gene cluster that mediates the biosynthesis of fusaric acid, a mycotoxin with low to moderate toxicity to animals and humans, but with high phytotoxic properties. L-aspartate is suggested as fusaric acid amino acid precursor that is activated and further processed to O-acetyl-L-homoserine by cluster enzymes aspartate kinase FUB3 and homoserine O-acetyltransferase FUB5, as well as enzymes of the primary metabolism. The polyketide synthase (PKS) FUB1 generates the triketide trans-2-hexenal which is presumptively released by the hydrolase FUB4 and linked to the NRPS-bound amino acid precursor by NAD(P)-dependent dehydrogenase FUB6. FUB1, FUB4, and the non-canonical NRPS Fub8 may form an enzyme complex. Further processing of the NRPS-bound intermediate might be carried out by FUB6 and the sulfhydrylase FUB7, enabling a spontaneous electrocyclization to close the carbon backbone of fusaric acid. Dihydrofusaric acid is likely to be released via reduction by the thioester reductase (TR) domain of FUB8 whereupon the final oxidation to fusaric acid may (also) be performed by the FMN-dependent dehydrogenase FUB9. The chain is Non-canonical non-ribosomal peptide synthetase FUB8 from Fusarium oxysporum f. sp. lycopersici (strain 4287 / CBS 123668 / FGSC 9935 / NRRL 34936) (Fusarium vascular wilt of tomato).